Consider the following 835-residue polypeptide: Leucine--tRNA ligase (835 aa).

Positions 41 to 52 (PYPSGQGLHVGH) match the 'HIGH' region motif. A 'KMSKS' region motif is present at residues 611–615 (KMSKS). Lys614 is an ATP binding site.

It belongs to the class-I aminoacyl-tRNA synthetase family.

The protein localises to the cytoplasm. It catalyses the reaction tRNA(Leu) + L-leucine + ATP = L-leucyl-tRNA(Leu) + AMP + diphosphate. In Elusimicrobium minutum (strain Pei191), this protein is Leucine--tRNA ligase.